The chain runs to 396 residues: MTTNTVSRKVAWLRVVTLAVAAFIFNTTEFVPVGLLSDIAQSFHMQTAQVGIMLTIYAWVVALMSLPFMLMTSQVERRKLLICLFVVFIASHVLSFLSWSFTVLVISRIGVAFAHAIFWSITASLAIRMAPAGKRAQALSLIATGTALAMVLGLPLGRIVGQYFGWRMTFFAIGIGALITLLCLIKLLPLLPSEHSGSLKSLPLLFRRPALMSIYLLTVVVVTAHYTAYSYIEPFVQNIAGFSANFATALLLLLGGAGIIGSVIFGKLGNQYASTLVSTAIALLLVCLALLLPAANSEIHLGVLSIFWGIAMMIIGLGMQVKVLALAPDATDVAMALFSGIFNIGIGAGALVGNQVSLHWSMSMIGYVGAVPAFAALIWSIIIFRRWPVTLEEQTQ.

Helical transmembrane passes span 15–35 (VVTL…PVGL), 50–70 (VGIM…PFML), 81–101 (LICL…SWSF), 103–123 (VLVI…SITA), 136–156 (AQAL…GLPL), 170–190 (FFAI…LLPL), 209–229 (PALM…YTAY), 246–266 (FATA…VIFG), 275–295 (TLVS…LPAA), 299–319 (IHLG…GLGM), 333–353 (VAMA…ALVG), and 364–384 (MIGY…IIIF).

Belongs to the major facilitator superfamily. SotB (TC 2.A.1.2) family.

The protein resides in the cell inner membrane. In terms of biological role, involved in the efflux of sugars. The physiological role may be the reduction of the intracellular concentration of toxic sugars or sugar metabolites. The protein is Probable sugar efflux transporter of Escherichia coli (strain SMS-3-5 / SECEC).